The primary structure comprises 365 residues: Class I histocompatibility antigen, Gogo-A*0501 alpha chain (365 aa).

Residues 1 to 24 (MAVVAPRTLLLLLSGALALTQTWA) form the signal peptide. The segment at 25–114 (GSHSMRYFST…ALRYYNQSED (90 aa)) is alpha-1. Residues 25 to 308 (GSHSMRYFST…EPSSQPTIPI (284 aa)) lie on the Extracellular side of the membrane. N-linked (GlcNAc...) asparagine glycosylation is present at N110. Residues 115–206 (GSHTIQRMYG…ENGKETLQRT (92 aa)) form an alpha-2 region. Disulfide bonds link C125/C188 and C227/C283. Residues 207–298 (DAPKTHTTHQ…GLPKPLTLRW (92 aa)) form an alpha-3 region. In terms of domain architecture, Ig-like C1-type spans 209–295 (PKTHTTHQAV…QHEGLPKPLT (87 aa)). The connecting peptide stretch occupies residues 299-308 (EPSSQPTIPI). Residues 309–332 (VGIIAGLVLFGAVIAGAVVAAVRW) form a helical membrane-spanning segment. The Cytoplasmic segment spans residues 333–365 (RRKSSDRKGGSYSQAASSDSAQGSDVSLTACKV). Positions 338 to 365 (DRKGGSYSQAASSDSAQGSDVSLTACKV) are disordered. Low complexity predominate over residues 342-359 (GSYSQAASSDSAQGSDVS). Phosphoserine is present on S343. A Phosphotyrosine modification is found at Y344. A phosphoserine mark is found at S345, S349, S352, S356, and S359.

Belongs to the MHC class I family. Heterodimer of an alpha chain and a beta chain (beta-2-microglobulin).

It localises to the membrane. In terms of biological role, involved in the presentation of foreign antigens to the immune system. This chain is Class I histocompatibility antigen, Gogo-A*0501 alpha chain, found in Gorilla gorilla gorilla (Western lowland gorilla).